The sequence spans 197 residues: Imidazoleglycerol-phosphate dehydratase (197 aa).

This sequence belongs to the imidazoleglycerol-phosphate dehydratase family.

The protein resides in the cytoplasm. It carries out the reaction D-erythro-1-(imidazol-4-yl)glycerol 3-phosphate = 3-(imidazol-4-yl)-2-oxopropyl phosphate + H2O. The protein operates within amino-acid biosynthesis; L-histidine biosynthesis; L-histidine from 5-phospho-alpha-D-ribose 1-diphosphate: step 6/9. The sequence is that of Imidazoleglycerol-phosphate dehydratase from Saccharophagus degradans (strain 2-40 / ATCC 43961 / DSM 17024).